Here is a 151-residue protein sequence, read N- to C-terminus: UPF0756 membrane protein LBA0919 (151 aa).

The next 4 membrane-spanning stretches (helical) occupy residues 4 to 24 (WLFLALILVVALLGKNMSLII), 52 to 72 (WGVTIISVAILIPIATGQIGF), 78 to 98 (TFKTPAGWIAILAGIAVAVLS), and 115 to 135 (LVLGTIIGVVAFKGVAAGPVI).

Belongs to the UPF0756 family.

It localises to the cell membrane. This Lactobacillus acidophilus (strain ATCC 700396 / NCK56 / N2 / NCFM) protein is UPF0756 membrane protein LBA0919.